Consider the following 348-residue polypeptide: UPF0324 membrane protein BH02290 (348 aa).

Transmembrane regions (helical) follow at residues 13–35 (AFLNDFSPGILACLIISVLAYGL), 45–67 (QAWLESLVLAILLGSITGSCFTL), 74–96 (GITFCAKTLLEIAIVLLGASISV), 106–128 (LLASIIFVIFVTLILSFTIGRLF), 135–157 (AMLVACGNAICGNSAIVAVAPVI), 167–189 (SIAFTALLGVLIILFLPFLHPFL), 196–218 (YGVLSGMVVYAVPQVLAATASVS), 223–245 (QIATVVKLVRVLMLGPLIFALSI), 257–275 (LHTLVPWFIIGFIFMMLIR), 285–307 (LIPIRFIAQLFTVISMAALGLGV), and 319–341 (VILASTCSILILGVCSLIMIQLN).

The protein belongs to the UPF0324 family.

It localises to the cell membrane. The chain is UPF0324 membrane protein BH02290 from Bartonella henselae (strain ATCC 49882 / DSM 28221 / CCUG 30454 / Houston 1) (Rochalimaea henselae).